The sequence spans 510 residues: NAD(P)H-quinone oxidoreductase subunit 2 A, chloroplastic (510 aa).

13 helical membrane passes run 24 to 44, 57 to 77, 99 to 119, 124 to 144, 149 to 169, 183 to 203, 227 to 247, 295 to 315, 323 to 343, 354 to 374, 395 to 415, 418 to 438, and 484 to 504; these read LLLFDGSLIFPECILIFGLIL, IPWLYFISSTSLVLSITALLF, IFQFLILLCSTLCIPLSVEYI, MAITEFLLFVLTATLGGMFLC, LITIFVAPECFSLCSYLLSGY, YLLMGGASSSILVHGFSWLYG, PGISIALIFITVGIGFKLSPA, WHLLLEILAILSMILGNLIAI, MLAYSSIGQIGYVIIGIIVGD, YMLFYISMNLGTFACIVLFGL, ALSLALCLLSLGGLPPLAGFF, LYLFWCGWQAGLYFLVLIGLL, and MIVCVIASTIPGISMNPIIAI.

The protein belongs to the complex I subunit 2 family. NDH is composed of at least 16 different subunits, 5 of which are encoded in the nucleus.

It localises to the plastid. It is found in the chloroplast thylakoid membrane. The catalysed reaction is a plastoquinone + NADH + (n+1) H(+)(in) = a plastoquinol + NAD(+) + n H(+)(out). The enzyme catalyses a plastoquinone + NADPH + (n+1) H(+)(in) = a plastoquinol + NADP(+) + n H(+)(out). Its function is as follows. NDH shuttles electrons from NAD(P)H:plastoquinone, via FMN and iron-sulfur (Fe-S) centers, to quinones in the photosynthetic chain and possibly in a chloroplast respiratory chain. The immediate electron acceptor for the enzyme in this species is believed to be plastoquinone. Couples the redox reaction to proton translocation, and thus conserves the redox energy in a proton gradient. This Solanum tuberosum (Potato) protein is NAD(P)H-quinone oxidoreductase subunit 2 A, chloroplastic.